A 293-amino-acid polypeptide reads, in one-letter code: N-acetylneuraminate lyase (293 aa).

Aceneuramate is bound by residues Ser-48 and Ser-49. Tyr-137 serves as the catalytic Proton donor. Lys-165 functions as the Schiff-base intermediate with substrate in the catalytic mechanism. Residues Thr-167, Gly-189, Asp-191, Glu-192, and Ser-208 each contribute to the aceneuramate site.

Belongs to the DapA family. NanA subfamily. Homotetramer.

The protein localises to the cytoplasm. The enzyme catalyses aceneuramate = aldehydo-N-acetyl-D-mannosamine + pyruvate. It participates in amino-sugar metabolism; N-acetylneuraminate degradation; D-fructose 6-phosphate from N-acetylneuraminate: step 1/5. In terms of biological role, catalyzes the reversible aldol cleavage of N-acetylneuraminic acid (sialic acid; Neu5Ac) to form pyruvate and N-acetylmannosamine (ManNAc) via a Schiff base intermediate. The polypeptide is N-acetylneuraminate lyase (Staphylococcus aureus (strain MRSA252)).